Reading from the N-terminus, the 471-residue chain is GTPase Der (471 aa).

EngA-type G domains are found at residues 3–166 (PTLA…EPEA) and 177–350 (IKLA…SSAT). Residues 9 to 16 (GRPNVGKS), 56 to 60 (DTGGI), 118 to 121 (NKVD), 183 to 190 (GRPNVGKS), 230 to 234 (DTAGV), and 295 to 298 (NKWD) contribute to the GTP site. Residues 351–435 (EKLNTNFLTK…PIRFEFKSSE (85 aa)) form the KH-like domain. A disordered region spans residues 432 to 471 (KSSENPFAGRKNAMSKKPEHPSRRANSGGKSINRRPRPKS).

It belongs to the TRAFAC class TrmE-Era-EngA-EngB-Septin-like GTPase superfamily. EngA (Der) GTPase family. Associates with the 50S ribosomal subunit.

GTPase that plays an essential role in the late steps of ribosome biogenesis. The sequence is that of GTPase Der from Saccharophagus degradans (strain 2-40 / ATCC 43961 / DSM 17024).